Here is a 164-residue protein sequence, read N- to C-terminus: Putative 4-hydroxy-4-methyl-2-oxoglutarate aldolase (164 aa).

Residues 74 to 77 (GGNL) and arginine 96 each bind substrate. Aspartate 97 contacts a divalent metal cation.

It belongs to the class II aldolase/RraA-like family. As to quaternary structure, homotrimer. A divalent metal cation serves as cofactor.

It catalyses the reaction 4-hydroxy-4-methyl-2-oxoglutarate = 2 pyruvate. It carries out the reaction oxaloacetate + H(+) = pyruvate + CO2. Functionally, catalyzes the aldol cleavage of 4-hydroxy-4-methyl-2-oxoglutarate (HMG) into 2 molecules of pyruvate. Also contains a secondary oxaloacetate (OAA) decarboxylase activity due to the common pyruvate enolate transition state formed following C-C bond cleavage in the retro-aldol and decarboxylation reactions. This Thermus thermophilus (strain ATCC BAA-163 / DSM 7039 / HB27) protein is Putative 4-hydroxy-4-methyl-2-oxoglutarate aldolase.